Reading from the N-terminus, the 586-residue chain is Monoterpene synthase TPS4, chloroplastic (586 aa).

A chloroplast-targeting transit peptide spans 1-47; the sequence is MAATRNLSLLAQSSQPWAGIYGSHGSPRPISSWLRRQSIAKTSYICM. Mg(2+) is bound by residues Asp-340, Asp-344, Asp-485, Thr-489, and Glu-493. A DDXXD motif motif is present at residues 340-344; that stretch reads DDIFD.

The protein belongs to the terpene synthase family. Tpsg subfamily. Monomer. Mg(2+) is required as a cofactor.

The protein resides in the plastid. Its subcellular location is the chloroplast. It catalyses the reaction (2E)-geranyl diphosphate + H2O = (2E)-geraniol + diphosphate. The protein operates within secondary metabolite biosynthesis; terpenoid biosynthesis. Functionally, monoterpene synthase involved in the biosynthesis of volatile organic compounds. Mediates the conversion of (2E)-geranyl diphosphate (GPP) into the acyclic monoterpene, geraniol. Does not use (2E,6E)-farnesyl diphosphate (FPP) as substrate. The chain is Monoterpene synthase TPS4, chloroplastic from Cananga odorata (Ylang-ylang tree).